The sequence spans 441 residues: Deoxyguanosinetriphosphate triphosphohydrolase-like protein 1 (441 aa).

The region spanning arginine 62–glycine 255 is the HD domain.

It belongs to the dGTPase family. Type 2 subfamily.

This is Deoxyguanosinetriphosphate triphosphohydrolase-like protein 1 from Vibrio cholerae serotype O1 (strain ATCC 39315 / El Tor Inaba N16961).